The following is a 486-amino-acid chain: O-methyltransferase gedA (486 aa).

Residues 298–299 (GG), Asp321, 353–354 (SF), and Arg369 each bind S-adenosyl-L-methionine. His373 (proton acceptor) is an active-site residue.

This sequence belongs to the class I-like SAM-binding methyltransferase superfamily. Cation-independent O-methyltransferase family.

The enzyme catalyses emodin + S-adenosyl-L-methionine = questin + S-adenosyl-L-homocysteine + H(+). It functions in the pathway secondary metabolite biosynthesis. Functionally, O-methyltransferase; part of the gene cluster that mediates the biosynthesis of geodin, an intermediate in the biosynthesis of other natural products. The pathway begins with the synthesis of atrochrysone thioester by the polyketide synthase (PKS) gedC. The atrochrysone carboxyl ACP thioesterase gedB then breaks the thioester bond and releases the atrochrysone carboxylic acid from gedC. The atrochrysone carboxylic acid is then converted to atrochrysone which is further transformed into emodinanthrone. The next step is performed by the emodinanthrone oxygenase gedH that catalyzes the oxidation of emodinanthrone to emodin. Emodin O-methyltransferase encoded probably by gedA then catalyzes methylation of the 8-hydroxy group of emodin to form questin. Ring cleavage of questin by questin oxidase gedK leads to desmethylsulochrin via several intermediates including questin epoxide. Another methylation step probably catalyzed by methyltransferase gedG leads to the formation of sulochrin which is further converted to dihydrogeodin by the sulochrin halogenase gedL. Finally, the dihydrogeodin oxidase gedJ catalyzes the stereospecific phenol oxidative coupling reaction converting dihydrogeodin to geodin. This chain is O-methyltransferase gedA, found in Aspergillus terreus (strain NIH 2624 / FGSC A1156).